Here is a 258-residue protein sequence, read N- to C-terminus: Small ribosomal subunit protein uS3 (258 aa).

The region spanning 43 to 111 (IRKLMSTGLE…QVQLNILEVK (69 aa)) is the KH type-2 domain. A disordered region spans residues 217–258 (AREQASAAPRARGRADRPRGRRDEGAAPQQAAAPAATTGTEA). Over residues 229–241 (GRADRPRGRRDEG) the composition is skewed to basic and acidic residues. Low complexity predominate over residues 242–258 (AAPQQAAAPAATTGTEA).

It belongs to the universal ribosomal protein uS3 family. As to quaternary structure, part of the 30S ribosomal subunit. Forms a tight complex with proteins S10 and S14.

Binds the lower part of the 30S subunit head. Binds mRNA in the 70S ribosome, positioning it for translation. The polypeptide is Small ribosomal subunit protein uS3 (Beutenbergia cavernae (strain ATCC BAA-8 / DSM 12333 / CCUG 43141 / JCM 11478 / NBRC 16432 / NCIMB 13614 / HKI 0122)).